Here is a 569-residue protein sequence, read N- to C-terminus: MKFQRKYWGLLSTLGVSSAVALSACAAQARDVYVTSSASDLLKNNLVPMSMFNVSPTSSFFGSKYAGLTTYIATGSNKDDGVNVTSQTQEKLVLELATSVKGYKKKTSTASNMKTASVSSSSSSTGNNGSTEDEWEVVGSEIKRESGKGDNGKSITEDSNFQTISQQATRYEFTIDTSIKWVDNNGKPVKDEKGQEVKLSSKDFERGFEAYILSSELRFNRNGYFIDLMGLDVEKTVGMTNGKNGTQVKKMTTDSSSTQQSEEKKIEITDDNYDPEDYRSTSDDKFNVYLTSPFPFLLSMMSKEFFFPIPHTHPKVKAIKVGPNSPLVYNEKNSAKILDQTKTNFDGIYGGGGVNAWRDAWSVGPYYVESFNQSQIVFKRNKEYDDHITPNLPKTREGNEQPIPTMINYFQPGATPEVFYSNYIAGGLSSAGVSYSQQEDARSRFASTGDLRWVKVQKTAQSAQITYSSRPYILEGETVKTNSNITETEAKFLYNSESEEALTIRAGINGLINWQNLAIILLPNSGDLNYSIVPFGIFKEKGKDVQVKQKNTGQASQGSDLMNDYYYKI.

The signal sequence occupies residues Met1 to Ala24. Cys25 carries N-palmitoyl cysteine lipidation. The S-diacylglycerol cysteine moiety is linked to residue Cys25. 2 disordered regions span residues Ser111–Val137 and Gly242–Glu267. 2 stretches are compositionally biased toward low complexity: residues Ser119 to Ser130 and Lys249 to Gln260.

This sequence to M.pneumoniae MPN_456 and M.genitalium MG321 N-terminal region.

It is found in the cell membrane. This is an uncharacterized protein from Mycoplasma pneumoniae (strain ATCC 29342 / M129 / Subtype 1) (Mycoplasmoides pneumoniae).